Here is a 602-residue protein sequence, read N- to C-terminus: DNA ligase (602 aa).

Glu-262 contacts ATP. Lys-264 functions as the N6-AMP-lysine intermediate in the catalytic mechanism. ATP is bound by residues Arg-269, Arg-284, Glu-314, Phe-354, Arg-431, and Lys-437.

Belongs to the ATP-dependent DNA ligase family. As to quaternary structure, monomer. Requires Mg(2+) as cofactor. The cofactor is Mn(2+).

The catalysed reaction is ATP + (deoxyribonucleotide)n-3'-hydroxyl + 5'-phospho-(deoxyribonucleotide)m = (deoxyribonucleotide)n+m + AMP + diphosphate.. It catalyses the reaction ADP + (deoxyribonucleotide)n-3'-hydroxyl + 5'-phospho-(deoxyribonucleotide)m = (deoxyribonucleotide)n+m + AMP + phosphate.. The enzyme catalyses GTP + (deoxyribonucleotide)n-3'-hydroxyl + 5'-phospho-(deoxyribonucleotide)m = (deoxyribonucleotide)n+m + GMP + diphosphate.. Inhibited in the presence of 100 mM KCl, NaCl or NH(4)Cl. In terms of biological role, DNA ligase that seals nicks in double-stranded DNA during DNA replication, DNA recombination and DNA repair. Can also use ADP, but not NAD(+). This Aeropyrum pernix (strain ATCC 700893 / DSM 11879 / JCM 9820 / NBRC 100138 / K1) protein is DNA ligase.